The chain runs to 428 residues: Serine--tRNA ligase (428 aa).

231–233 (TAE) contacts L-serine. 262–264 (RSE) contributes to the ATP binding site. Glu285 contributes to the L-serine binding site. 349-352 (EISS) is a binding site for ATP. Residue Ser385 participates in L-serine binding.

It belongs to the class-II aminoacyl-tRNA synthetase family. Type-1 seryl-tRNA synthetase subfamily. Homodimer. The tRNA molecule binds across the dimer.

Its subcellular location is the cytoplasm. It catalyses the reaction tRNA(Ser) + L-serine + ATP = L-seryl-tRNA(Ser) + AMP + diphosphate + H(+). The enzyme catalyses tRNA(Sec) + L-serine + ATP = L-seryl-tRNA(Sec) + AMP + diphosphate + H(+). Its pathway is aminoacyl-tRNA biosynthesis; selenocysteinyl-tRNA(Sec) biosynthesis; L-seryl-tRNA(Sec) from L-serine and tRNA(Sec): step 1/1. Functionally, catalyzes the attachment of serine to tRNA(Ser). Is also able to aminoacylate tRNA(Sec) with serine, to form the misacylated tRNA L-seryl-tRNA(Sec), which will be further converted into selenocysteinyl-tRNA(Sec). This chain is Serine--tRNA ligase, found in Staphylococcus aureus (strain MSSA476).